Consider the following 169-residue polypeptide: Peptide deformylase (169 aa).

Residues Cys91 and His133 each contribute to the Fe cation site. Glu134 is a catalytic residue. Position 137 (His137) interacts with Fe cation.

Belongs to the polypeptide deformylase family. The cofactor is Fe(2+).

The catalysed reaction is N-terminal N-formyl-L-methionyl-[peptide] + H2O = N-terminal L-methionyl-[peptide] + formate. In terms of biological role, removes the formyl group from the N-terminal Met of newly synthesized proteins. Requires at least a dipeptide for an efficient rate of reaction. N-terminal L-methionine is a prerequisite for activity but the enzyme has broad specificity at other positions. The chain is Peptide deformylase from Citrobacter koseri (strain ATCC BAA-895 / CDC 4225-83 / SGSC4696).